The following is a 271-amino-acid chain: Oligodendrocyte transcription factor 1 (271 aa).

The tract at residues 38-117 is disordered; that stretch reads YRQPPSSSSS…RKINSRERKR (80 aa). Residues 43–61 are compositionally biased toward low complexity; the sequence is SSSSSSTSSTSSTSSSSTT. Positions 105–164 constitute a bHLH domain; that stretch reads QLRRKINSRERKRMQDLNLAMDALREVILPYSAAHCQGAPGRKLSKIATLLLARNYILLL.

Expressed in the brain, in oligodendrocytes. Strongly expressed in oligodendrogliomas, while expression is weak to moderate in astrocytomas. Expression in glioblastomas is highly variable.

It localises to the nucleus. Functionally, promotes formation and maturation of oligodendrocytes, especially within the brain. Cooperates with OLIG2 to establish the pMN domain of the embryonic neural tube. This is Oligodendrocyte transcription factor 1 (OLIG1) from Homo sapiens (Human).